A 150-amino-acid chain; its full sequence is Large ribosomal subunit protein bL9 (150 aa).

The protein belongs to the bacterial ribosomal protein bL9 family.

Its function is as follows. Binds to the 23S rRNA. In Burkholderia thailandensis (strain ATCC 700388 / DSM 13276 / CCUG 48851 / CIP 106301 / E264), this protein is Large ribosomal subunit protein bL9.